A 485-amino-acid polypeptide reads, in one-letter code: MKLELVFIPSPGDGHLRPLVEVAKLHVDRDDHLSITIIIIPQMHGFSSSNSSSYIASLSSDSEERLSYNVLSVPDKPDSDDTKPHFFDYIDNFKPQVKATVEKLTDPGPPDSPSRLAGFVVDMFCMMMIDVANEFGVPSYMFYTSNATFLGLQVHVEYLYDVKNYDVSDLKDSDTTELEVPCLTRPLPVKCFPSVLLTKEWLPVMFRQTRRFRETKGILVNTFAELEPQAMKFFSGVDSPLPTVYTVGPVMNLKINGPNSSDDKQSEILRWLDEQPRKSVVFLCFGSMGGFREGQAKEIAIALERSGHRFVWSLRRAQPKGSIGPPEEFTNLEEILPEGFLERTAEIGKIVGWAPQSAILANPAIGGFVSHCGWNSTLESLWFGVPMATWPLYAEQQVNAFEMVEELGLAVEVRNSFRGDFMAADDELMTAEEIERGIRCLMEQDSDVRSRVKEMSEKSHVALMDGGSSHVALLKFIQDVTKNIS.

UDP-alpha-D-glucose is bound by residues Ser-287, Ala-354–Gln-356, His-371–Glu-379, and Tyr-393–Gln-396.

The protein belongs to the UDP-glycosyltransferase family.

Glucosyltransferase that glucosylates the cell wall inhibitor hypostatin in vivo to form a bioactive glucoside. This is UDP-glycosyltransferase 71B2 (UGT71B2) from Arabidopsis thaliana (Mouse-ear cress).